The primary structure comprises 718 residues: MARYELVKRSVALITLTNPPVNALSSAVRHAISKTMERALSDPKVTAVVICGENGRFCGGADIREFAGPLRGPPLVPLLDAIEAGEKPVVAAIEGVALGGGFELALVCHYRIAHYKARLGLPEVTLGILPAAGGTQRLPRLIGIPAALELITTGRHVSAQEALKLGMVDQVTEQNTCEVALEFALKAVGKPLSSRRLSMLTTPCPPGLDGIFEAATMQVQKKARGVMAPLACVQAVRAATLPYSEGIKREGELMATLFSSGQAQALQYSFFAQRTAEKWTLPSGAQWNNSKPREIQSAAVIGLGTMGRGIVVSLARVGISVIAVESEKKLLETGRQMVIGMLERDAKRRGVSASLNLLKFSLSLQDLKDVDLVIEAVFEDMALKKQIFRELSRVCRPATLLCSNTSGLDVDALADVTDRPQLVAGMHFFSPAHVMKLLEVVCGPRSSKEAIATAMSLGKRMGKVSVAVGNCPGFVGNRMLMPYLEQATFLLEEGATPQQIDKALEDFGFAMGVFRMSDLAGLDVGWRVRKESGLTGPDVDPKDPPRRRQGRKYCPIPDMVCQQGRFGQKTGRGWYMYDKPGDTNAKPDPLIQNLLETYRSRYGIQPRKITDQEIIERCLFALANEGFRILKDKIAGQPEDIDVIYLFGYGFPRHRGGPMFYASMVGLERVLERLEYYHHALPDVPHLEPSPLLKKLVARGSPPIQKWREHIKSMHSHL.

An enoyl-CoA hydratase / isomerase region spans residues 2–280 (ARYELVKRSV…FAQRTAEKWT (279 aa)). Gly-100 provides a ligand contact to substrate. The interval 281–567 (LPSGAQWNNS…DMVCQQGRFG (287 aa)) is 3-hydroxyacyl-CoA dehydrogenase. A Microbody targeting signal motif is present at residues 716–718 (SHL).

The protein in the N-terminal section; belongs to the enoyl-CoA hydratase/isomerase family. It in the C-terminal section; belongs to the 3-hydroxyacyl-CoA dehydrogenase family. As to quaternary structure, monomer.

It localises to the peroxisome. It catalyses the reaction a (3S)-3-hydroxyacyl-CoA = a (2E)-enoyl-CoA + H2O. The catalysed reaction is a 4-saturated-(3S)-3-hydroxyacyl-CoA = a (3E)-enoyl-CoA + H2O. It carries out the reaction a (3Z)-enoyl-CoA = a 4-saturated (2E)-enoyl-CoA. The enzyme catalyses a (3E)-enoyl-CoA = a 4-saturated (2E)-enoyl-CoA. It catalyses the reaction a (3S)-3-hydroxyacyl-CoA + NAD(+) = a 3-oxoacyl-CoA + NADH + H(+). The catalysed reaction is (2S,3S)-3-hydroxy-2-methylbutanoyl-CoA = (2E)-2-methylbut-2-enoyl-CoA + H2O. It carries out the reaction (3S)-hydroxyhexadecanoyl-CoA + NAD(+) = 3-oxohexadecanoyl-CoA + NADH + H(+). The enzyme catalyses (3S)-hydroxyhexadecanoyl-CoA = (2E)-hexadecenoyl-CoA + H2O. It catalyses the reaction (2E)-hexadecenedioyl-CoA + H2O = (3S)-hydroxyhexadecanedioyl-CoA. The catalysed reaction is (3S)-hydroxyhexadecanedioyl-CoA + NAD(+) = 3-oxohexadecanedioyl-CoA + NADH + H(+). It carries out the reaction (3E,5Z)-tetradecadienoyl-CoA = (2E,5Z)-tetradecadienoyl-CoA. The enzyme catalyses (3E,5Z)-octadienoyl-CoA = (2E,5Z)-octadienoyl-CoA. It catalyses the reaction (3S)-hydroxydecanoyl-CoA + NAD(+) = 3-oxodecanoyl-CoA + NADH + H(+). The catalysed reaction is (3E)-decenoyl-CoA = (2E)-decenoyl-CoA. It carries out the reaction (3Z)-hexenoyl-CoA = (2E)-hexenoyl-CoA. The enzyme catalyses (3E)-hexenoyl-CoA = (2E)-hexenoyl-CoA. It catalyses the reaction (3S)-hydroxydecanoyl-CoA = (2E)-decenoyl-CoA + H2O. The catalysed reaction is (3S)-hydroxyhexanoyl-CoA = (2E)-hexenoyl-CoA + H2O. It participates in lipid metabolism; fatty acid beta-oxidation. Functionally, peroxisomal trifunctional enzyme possessing 2-enoyl-CoA hydratase, 3-hydroxyacyl-CoA dehydrogenase, and delta 3, delta 2-enoyl-CoA isomerase activities. Catalyzes two of the four reactions of the long straight chain fatty acids peroxisomal beta-oxidation pathway. Can also use branched-chain fatty acids such as 2-methyl-2E-butenoyl-CoA as a substrate, which is hydrated into (2S,3S)-3-hydroxy-2-methylbutanoyl-CoA. Optimal isomerase for 2,5 double bonds into 3,5 form isomerization in a range of enoyl-CoA species. Also able to isomerize both 3-cis and 3-trans double bonds into the 2-trans form in a range of enoyl-CoA species. Regulates the amount of medium-chain dicarboxylic fatty acids which are essential regulators of all fatty acid oxidation pathways. Also involved in the degradation of long-chain dicarboxylic acids through peroxisomal beta-oxidation. The chain is Peroxisomal bifunctional enzyme (ehhadh) from Danio rerio (Zebrafish).